We begin with the raw amino-acid sequence, 79 residues long: Spidroin-1 (79 aa).

Belongs to the silk fibroin family. In terms of assembly, major subunit, with spidroin 2, of the dragline silk.

It is found in the secreted. The protein resides in the extracellular space. Its function is as follows. Spiders' major ampullate silk possesses unique characteristics of strength and elasticity. Fibroin consists of pseudocrystalline regions of antiparallel beta-sheet interspersed with elastic amorphous segments. This is Spidroin-1 from Araneus bicentenarius (Giant lichen orbweaver).